Here is a 68-residue protein sequence, read N- to C-terminus: Protein transport protein Sec61 subunit gamma (68 aa).

Residues methionine 1–glutamate 32 lie on the Cytoplasmic side of the membrane. A helical transmembrane segment spans residues tyrosine 33–isoleucine 61. The Extracellular segment spans residues asparagine 62–alanine 68.

This sequence belongs to the SecE/SEC61-gamma family. As to quaternary structure, heterotrimeric complex composed of SEC61-alpha, SEC61-beta and SEC61-gamma. Expressed in the germline. Expression in the germline is regulated in a sex- and meiotic cycle stage-specific manner. Expressed in somatic tissues including the intestine and somatic gonad. Expressed in the intestine more highly in hermaprodites than in males. In hermaphrodites, weakly expressed in the spermatheca.

The protein localises to the endoplasmic reticulum membrane. In terms of biological role, required for oocyte development and ovulation. Required for the translocation of secretory and transmembrane proteins into the endoplasmic reticulum in vitro. In Caenorhabditis elegans, this protein is Protein transport protein Sec61 subunit gamma.